The sequence spans 312 residues: Very-long-chain 3-oxoacyl-CoA reductase (312 aa).

The helical transmembrane segment at 4-24 (ALPAAGFLYWVGAGTVAYLAL) threads the bilayer. Position 50–79 (50–79 (GEWAVVTGGTDGIGKSYAEELAKRGMKVVL)) interacts with NADP(+). 2 helical membrane-spanning segments follow: residues 182-202 (GAILNISSGSGMFPVPLLTIY) and 271-291 (GYLIHVLMGWIISNLPSWIYL). Ser189 contributes to the substrate binding site. The Proton acceptor role is filled by Tyr202. A Di-lysine motif motif is present at residues 308–312 (KIKKN).

It belongs to the short-chain dehydrogenases/reductases (SDR) family. 17-beta-HSD 3 subfamily.

The protein localises to the endoplasmic reticulum membrane. The enzyme catalyses a very-long-chain (3R)-3-hydroxyacyl-CoA + NADP(+) = a very-long-chain 3-oxoacyl-CoA + NADPH + H(+). The catalysed reaction is 17beta-estradiol + NAD(+) = estrone + NADH + H(+). It carries out the reaction 17beta-estradiol + NADP(+) = estrone + NADPH + H(+). It catalyses the reaction 3-oxooctadecanoyl-CoA + NADPH + H(+) = (3R)-hydroxyoctadecanoyl-CoA + NADP(+). The enzyme catalyses (7Z,10Z,13Z,16Z)-3-oxodocosatetraenoyl-CoA + NADPH + H(+) = (3R)-hydroxy-(7Z,10Z,13Z,16Z)-docosatetraenoyl-CoA + NADP(+). The catalysed reaction is 3-oxo-(7Z,10Z,13Z,16Z,19Z)-docosapentaenoyl-CoA + NADPH + H(+) = (3R)-hydroxy-(7Z,10Z,13Z,16Z,19Z)-docosapentaenoyl-CoA + NADP(+). It carries out the reaction (8Z,11Z,14Z)-3-oxoeicosatrienoyl-CoA + NADPH + H(+) = (3R)-hydroxy-(8Z,11Z,14Z)-eicosatrienoyl-CoA + NADP(+). Its pathway is lipid metabolism; fatty acid biosynthesis. The protein operates within steroid biosynthesis; estrogen biosynthesis. Functionally, catalyzes the second of the four reactions of the long-chain fatty acids elongation cycle. This endoplasmic reticulum-bound enzymatic process, allows the addition of two carbons to the chain of long- and very long-chain fatty acids/VLCFAs per cycle. This enzyme has a 3-ketoacyl-CoA reductase activity, reducing 3-ketoacyl-CoA to 3-hydroxyacyl-CoA, within each cycle of fatty acid elongation. Thereby, it may participate in the production of VLCFAs of different chain lengths that are involved in multiple biological processes as precursors of membrane lipids and lipid mediators. May also catalyze the transformation of estrone (E1) into estradiol (E2) and play a role in estrogen formation. This Macaca fascicularis (Crab-eating macaque) protein is Very-long-chain 3-oxoacyl-CoA reductase (HSD17B12).